The sequence spans 221 residues: MTDQLQGSPVLAEVLGDALPKLERFHAKIAEEGEPRGLIGPRDVDIIWERHILNSAAIVPYVRNATNGIRFKTVADVGSGGGFPGLVAAACLPDHDFTLIEPMERRIEWLHECVGLMQLQNVEIIRGRSDAVIQQVRKREIHPFAVVTCRAVAPMTKLSGWTLPLLKPSGQLIALKGRSAQAEIDKAGKEIAKFGGRRPRVVEAAVGPDLEPTHVVIVDKR.

Positions 78, 83, and 150 each coordinate S-adenosyl-L-methionine.

It belongs to the methyltransferase superfamily. RNA methyltransferase RsmG family.

Its subcellular location is the cytoplasm. In terms of biological role, specifically methylates the N7 position of a guanine in 16S rRNA. The protein is Ribosomal RNA small subunit methyltransferase G of Bifidobacterium longum (strain DJO10A).